We begin with the raw amino-acid sequence, 352 residues long: Nicotinate-nucleotide--dimethylbenzimidazole phosphoribosyltransferase (352 aa).

The Proton acceptor role is filled by Glu316.

This sequence belongs to the CobT family.

The enzyme catalyses 5,6-dimethylbenzimidazole + nicotinate beta-D-ribonucleotide = alpha-ribazole 5'-phosphate + nicotinate + H(+). It functions in the pathway nucleoside biosynthesis; alpha-ribazole biosynthesis; alpha-ribazole from 5,6-dimethylbenzimidazole: step 1/2. Catalyzes the synthesis of alpha-ribazole-5'-phosphate from nicotinate mononucleotide (NAMN) and 5,6-dimethylbenzimidazole (DMB). The chain is Nicotinate-nucleotide--dimethylbenzimidazole phosphoribosyltransferase from Yersinia enterocolitica serotype O:8 / biotype 1B (strain NCTC 13174 / 8081).